We begin with the raw amino-acid sequence, 304 residues long: Non-specific ribonucleoside hydrolase RihC (304 aa).

The active site involves histidine 233.

The protein belongs to the IUNH family. RihC subfamily.

Hydrolyzes both purine and pyrimidine ribonucleosides with a broad-substrate specificity. This chain is Non-specific ribonucleoside hydrolase RihC, found in Escherichia coli O6:H1 (strain CFT073 / ATCC 700928 / UPEC).